Consider the following 305-residue polypeptide: MGAQLRVYKRRIRSVTATKKITKAMEMIAASRVVKAQRKVAASTPYATELTRAVTAVGTGSNTKHPLTTQAETVTRSAVLLLTSDRGLAGAFNSNAIKAAEQLTARLEAEGREVDTYIVGRRGAAHYNFRERKVTELWTGFTDEPTYADAKKVAGPLIEAIEKETADGGVDELHIVYTEFVSMMTQTAIDARLLPLSLEEVAEESSTQGEIRPLYDFEPSAEDVLDALLPRYVESRIYNALLQSAASKHAATRRAMKSATDNAGELINTLSRLANAARQAEITQEISEIVGGASALADATAGSDR.

It belongs to the ATPase gamma chain family. In terms of assembly, F-type ATPases have 2 components, CF(1) - the catalytic core - and CF(0) - the membrane proton channel. CF(1) has five subunits: alpha(3), beta(3), gamma(1), delta(1), epsilon(1). CF(0) has three main subunits: a, b and c.

It is found in the cell membrane. Functionally, produces ATP from ADP in the presence of a proton gradient across the membrane. The gamma chain is believed to be important in regulating ATPase activity and the flow of protons through the CF(0) complex. The chain is ATP synthase gamma chain from Streptomyces avermitilis (strain ATCC 31267 / DSM 46492 / JCM 5070 / NBRC 14893 / NCIMB 12804 / NRRL 8165 / MA-4680).